The chain runs to 229 residues: Small ribosomal subunit protein uS3 (229 aa).

Residues 18-87 (IDEYLAKQYY…NPQITITNVE (70 aa)) form the KH type-2 domain.

The protein belongs to the universal ribosomal protein uS3 family. In terms of assembly, part of the 30S ribosomal subunit.

Functionally, binds the lower part of the 30S subunit head. This Saccharolobus solfataricus (strain ATCC 35092 / DSM 1617 / JCM 11322 / P2) (Sulfolobus solfataricus) protein is Small ribosomal subunit protein uS3.